A 730-amino-acid chain; its full sequence is Hepatocyte growth factor (730 aa).

Positions 1–31 (MWVTRLLPVLLLQHVLLHLLLLPIAIPYAEG) are cleaved as a signal peptide. The residue at position 32 (Gln-32) is a Pyrrolidone carboxylic acid. One can recognise a PAN domain in the interval 37 to 123 (NTLHEFKRSA…HEFDLYENKD (87 aa)). 8 disulfide bridges follow: Cys-70/Cys-96, Cys-74/Cys-84, Cys-128/Cys-206, Cys-149/Cys-189, Cys-177/Cys-201, Cys-211/Cys-288, Cys-232/Cys-271, and Cys-260/Cys-283. Kringle domains follow at residues 128-206 (CIIG…IPQC) and 211-288 (CMTC…IKMC). Residue Asn-294 is glycosylated (N-linked (GlcNAc...) asparagine). 11 cysteine pairs are disulfide-bonded: Cys-305-Cys-383, Cys-326-Cys-365, Cys-354-Cys-377, Cys-391-Cys-469, Cys-412-Cys-452, Cys-440-Cys-464, Cys-487-Cys-606, Cys-519-Cys-535, Cys-614-Cys-681, Cys-644-Cys-660, and Cys-671-Cys-699. Kringle domains are found at residues 305-383 (CIQG…IPKC) and 391-469 (CYRG…ISRC). Residues 495–723 (VVNGIPTRTN…YAKWIHKIIL (229 aa)) enclose the Peptidase S1 domain. Asn-568 and Asn-655 each carry an N-linked (GlcNAc...) asparagine glycan.

Belongs to the peptidase S1 family. Plasminogen subfamily. As to quaternary structure, dimer of an alpha chain and a beta chain linked by a disulfide bond. Interacts with SRPX2; the interaction increases HGF mitogenic activity. In terms of processing, the single-chain precursor undergoes proteolytic processing by TMPRSS13 resulting in an active two-chain form. The single-chain precursor undergoes proteolytic processing by HGFAC resulting in an active two-chain form.

Potent mitogen for mature parenchymal hepatocyte cells, seems to be a hepatotrophic factor, and acts as a growth factor for a broad spectrum of tissues and cell types. Activating ligand for the receptor tyrosine kinase MET by binding to it and promoting its dimerization. Activates MAPK signaling following TMPRSS13 cleavage and activation. This Bos taurus (Bovine) protein is Hepatocyte growth factor (HGF).